The primary structure comprises 474 residues: MIEIQFYNSLSGKKEKFSPANPHRVTVYSCGPTVYNFAHIGNLRAFLFVDVLRRSLKLLGYGVDMTMNITDIDDKIIRDSIASQKSIQEFTTPWTEAFFEDLKTVSAEFLEHYPKATESIPEMIQIIQRLQNQGLVYEKDENLYFSIQKFEGYGKLSKIDTSGMKTGTRYDTDEYDKEDVRDFVLWKSPKRKGEASWKTSVGTGRPGWHLECSAMIRKIYGSGVDIHTGGVDLLFPHHENEIAQSEGAFPEESFVRTWLHSEHLLVEGQKMSKSKGNFYTLRDLVGQGLDPKAIRFLLISAHYRSKLNFSTDRIAEASANIRKIQNCLDRLLDIAQNVKIDPSYSFNDELTLRWKKEFEESLADDLNVSKALAVVFESLKTINAFLDSKKNRVAEISANEFIQILAYYDRIFGVLNFESQKDPLIDSEIDSLIQERQTARKNKDFARSDAIRDQLLAQGILIEDTKDGIRWRRK.

Cysteine 30 contributes to the Zn(2+) binding site. The 'HIGH' region signature appears at 32-42 (PTVYNFAHIGN). Cysteine 212, histidine 237, and glutamate 241 together coordinate Zn(2+). The 'KMSKS' region motif lies at 270–274 (KMSKS). Lysine 273 provides a ligand contact to ATP.

Belongs to the class-I aminoacyl-tRNA synthetase family. Monomer. The cofactor is Zn(2+).

The protein localises to the cytoplasm. It carries out the reaction tRNA(Cys) + L-cysteine + ATP = L-cysteinyl-tRNA(Cys) + AMP + diphosphate. This Leptospira borgpetersenii serovar Hardjo-bovis (strain JB197) protein is Cysteine--tRNA ligase.